Reading from the N-terminus, the 398-residue chain is Enoyl-[acyl-carrier-protein] reductase [NADH] (398 aa).

Residues 48–53, 74–75, 111–112, and 139–140 each bind NAD(+); these read GASTGY, FE, DA, and LA. Tyr-225 provides a ligand contact to substrate. Catalysis depends on Tyr-235, which acts as the Proton donor. NAD(+) is bound by residues Lys-244 and 273-275; that span reads VVT.

This sequence belongs to the TER reductase family. As to quaternary structure, monomer.

It catalyses the reaction a 2,3-saturated acyl-[ACP] + NAD(+) = a (2E)-enoyl-[ACP] + NADH + H(+). It participates in lipid metabolism; fatty acid biosynthesis. Involved in the final reduction of the elongation cycle of fatty acid synthesis (FAS II). Catalyzes the reduction of a carbon-carbon double bond in an enoyl moiety that is covalently linked to an acyl carrier protein (ACP). The sequence is that of Enoyl-[acyl-carrier-protein] reductase [NADH] from Paraburkholderia phytofirmans (strain DSM 17436 / LMG 22146 / PsJN) (Burkholderia phytofirmans).